The sequence spans 767 residues: MCGSALAFLTAALLSLHNCQRGPALVLGAAWVFSLVLGLGQSEHNRCGSANVVSCARCLQLGPECGWCVQEDFVSGGSGSERCDTVSSLISKGCPVDSIEYLSVHVVTSSENEINTQVTPGEVSVQLHPGAEANFMLKVRPLKKYPVDLYYLVDVSASMHNNIEKLNSVGNDLSKKMALYSRDFRLGFGSYVDKTVSPYISIHPERIHNQCSDYNLDCMPPHGYIHVLSLTENITEFEKAVHRQKISGNIDTPEGGFDAMLQAAVCESHIGWRKEAKRLLLVMTDQTSHLALDSKLAGIVVPNDGNCHLKNNVYVKSTTMEHPSLGQLSEKLIDNNINVIFAVQGKQFHWYKDLLPLLPGAIAGEIESKAANLNNLVVEAYKKIISEVKVQLENQVHGVHFNITAICPDGARKPGISGCGNVTSNDEVLFNVTVVMKTCDIMGGKNYAIIKPIGFNETTKVHIHRSCSCQCENHRGLKGQCAEAAPDPKCPQCDDSRCHFDEDQFPSETCKPQEDQPVCSGRGVCICGKCLCHKTKLGRVYGQYCEKDDFSCPYLHGDVCAGHGECEGGRCQCFSGWEGDRCQCPSASAQHCVNSKGQVCSGRGTCVCGRCECTDPRSIGRLCEHCPTCHLSCSENWNCLQCLHPHNLSQAALDQCKSSCAVMEQHRMDQTSECLSGPSYLRIFFIIFIVTFLIGLLKVLIIRQVILQWNNNKIKSSSDYRMSASKKDKLILQSVCTRAVTYRREKPEEIKMDISKLNAQEAFRCNF.

The N-terminal stretch at 1–21 is a signal peptide; sequence MCGSALAFLTAALLSLHNCQR. Residues 22 to 681 lie on the Extracellular side of the membrane; the sequence is GPALVLGAAW…SECLSGPSYL (660 aa). The PSI domain occupies 46–95; that stretch reads RCGSANVVSCARCLQLGPECGWCVQEDFVSGGSGSERCDTVSSLISKGCP. Intrachain disulfides connect Cys-47-Cys-65, Cys-55-Cys-469, Cys-58-Cys-83, Cys-68-Cys-94, Cys-211-Cys-218, Cys-266-Cys-307, Cys-407-Cys-419, Cys-439-Cys-467, Cys-471-Cys-490, Cys-471-Cys-493, Cys-481-Cys-493, Cys-498-Cys-527, Cys-510-Cys-525, Cys-519-Cys-530, Cys-532-Cys-545, Cys-552-Cys-566, Cys-560-Cys-571, Cys-573-Cys-582, Cys-584-Cys-608, Cys-592-Cys-606, Cys-600-Cys-611, Cys-613-Cys-623, Cys-626-Cys-629, Cys-633-Cys-660, and Cys-639-Cys-656. The VWFA domain occupies 146 to 384; the sequence is PVDLYYLVDV…NLVVEAYKKI (239 aa). Positions 154 and 156 each coordinate Mg(2+). Position 193 (Asp-193) interacts with Ca(2+). Asn-233 carries an N-linked (GlcNAc...) asparagine glycan. Ca(2+) is bound by residues Asn-249, Asp-251, Pro-253, and Glu-254. Glu-254 contributes to the Mg(2+) binding site. Residue Asn-402 is glycosylated (N-linked (GlcNAc...) asparagine). N-linked (GlcNAc...) asparagine glycosylation is found at Asn-421, Asn-431, and Asn-456. I-EGF domains lie at 471–494, 498–546, 547–583, and 584–624; these read CENH…PQCD, CHFD…QYCE, KDDF…DRCQ, and CPSA…RLCE. The N-linked (GlcNAc...) asparagine glycan is linked to Asn-647. The helical transmembrane segment at 682 to 702 threads the bilayer; it reads RIFFIIFIVTFLIGLLKVLII. The Cytoplasmic portion of the chain corresponds to 703–767; the sequence is RQVILQWNNN…NAQEAFRCNF (65 aa).

Belongs to the integrin beta chain family. Heterodimer of an alpha and a beta subunit. Beta-8 (ITGB8) associates with alpha-V (ITGAV) to form ITGAV:ITGB8. ITGAV:ITGB8 interacts with TGFB1.

The protein resides in the cell membrane. In terms of biological role, integrin alpha-V:beta-8 (ITGAV:ITGB8) is a receptor for fibronectin. It recognizes the sequence R-G-D in its ligands. Integrin alpha-V:beta-6 (ITGAV:ITGB6) mediates R-G-D-dependent release of transforming growth factor beta-1 (TGF-beta-1) from regulatory Latency-associated peptide (LAP), thereby playing a key role in TGF-beta-1 activation on the surface of activated regulatory T-cells (Tregs). Required during vasculogenesis. The chain is Integrin beta-8 from Mus musculus (Mouse).